Consider the following 275-residue polypeptide: Probable dual specificity protein phosphatase DDB_G0271350 (275 aa).

Positions 2 to 143 (GISMILDNFL…LCDLELKLTN (142 aa)) constitute a Tyrosine-protein phosphatase domain. C87 functions as the Phosphocysteine intermediate in the catalytic mechanism.

It belongs to the protein-tyrosine phosphatase family. Non-receptor class dual specificity subfamily.

It carries out the reaction O-phospho-L-tyrosyl-[protein] + H2O = L-tyrosyl-[protein] + phosphate. The catalysed reaction is O-phospho-L-seryl-[protein] + H2O = L-seryl-[protein] + phosphate. The enzyme catalyses O-phospho-L-threonyl-[protein] + H2O = L-threonyl-[protein] + phosphate. In terms of biological role, has a dual specificity toward Ser/Thr and Tyr-containing proteins. This is Probable dual specificity protein phosphatase DDB_G0271350 from Dictyostelium discoideum (Social amoeba).